Reading from the N-terminus, the 493-residue chain is 5'-3' exonuclease PLD3 (493 aa).

Over 1–37 (MSSKVEYKPIQPHEEAENHFLQHELHKVKARKYYRCA) the chain is Cytoplasmic. Residues 38–58 (LVVAIIITLVFCILASQLLLF) form a helical; Signal-anchor for type II membrane protein membrane-spanning segment. The Lumenal segment spans residues 59-493 (PFLSITSQTT…LSSWKEKCIF (435 aa)). N99 carries N-linked (GlcNAc...) asparagine glycosylation. A PLD phosphodiesterase 1 domain is found at 197–224 (TDGILHTKFWVVDNEHFYIGSANMDWRS). Residues H202, K204, and D209 contribute to the active site. N-linked (GlcNAc...) asparagine glycosylation is found at N237, N259, N269, N285, and N388. Residues 412–438 (YARVNHNKYMVTDRVAYIGTSNWSGDY) form the PLD phosphodiesterase 2 domain. Catalysis depends on residues H417, K419, and D424. Residues N433, N450, and N476 are each glycosylated (N-linked (GlcNAc...) asparagine).

Belongs to the phospholipase D family. In terms of processing, N-glycosylated. Proteolytically processed to a soluble form that is stable within endosomes and lysosomes. During transport through the secretory pathway becomes proteolysed by cysteine proteases, thereby releasing a stable soluble lysosomal lumenal polypeptide, whereas the transmembrane-bound fragment is rapidly degraded. Its transport route to lysosomes involves ubiquitination and the ESCRT complex. Post-translationally, ubiquitinated. Ubiquitination mediates sorting into lysosomes.

Its subcellular location is the endoplasmic reticulum membrane. The protein localises to the lysosome lumen. The protein resides in the early endosome membrane. It is found in the late endosome membrane. It localises to the golgi apparatus membrane. Its subcellular location is the endosome membrane. The catalysed reaction is Exonucleolytic cleavage in the 5'- to 3'-direction to yield nucleoside 3'-phosphates.. Functionally, 5'-&gt;3' DNA exonuclease which digests single-stranded DNA (ssDNA). Regulates inflammatory cytokine responses via the degradation of nucleic acids, by reducing the concentration of ssDNA able to stimulate TLR9, a nucleotide-sensing receptor in collaboration with PLD4. May be important in myotube formation. Plays a role in lysosomal homeostasis. Involved in the regulation of endosomal protein sorting. The protein is 5'-3' exonuclease PLD3 (pld3) of Xenopus laevis (African clawed frog).